The sequence spans 403 residues: S-adenosylmethionine synthase (403 aa).

His16 contacts ATP. Asp18 lines the Mg(2+) pocket. K(+) is bound at residue Glu44. L-methionine contacts are provided by Glu57 and Gln110. Residues 110–120 are flexible loop; that stretch reads QSAHIAQGVDA. Residues 175–177, Asp253, 259–260, Ala276, and Lys280 each bind ATP; these read DSK and RK. Position 253 (Asp253) interacts with L-methionine. An L-methionine-binding site is contributed by Lys284.

The protein belongs to the AdoMet synthase family. As to quaternary structure, homotetramer; dimer of dimers. The cofactor is Mg(2+). Requires K(+) as cofactor.

It is found in the cytoplasm. It catalyses the reaction L-methionine + ATP + H2O = S-adenosyl-L-methionine + phosphate + diphosphate. It functions in the pathway amino-acid biosynthesis; S-adenosyl-L-methionine biosynthesis; S-adenosyl-L-methionine from L-methionine: step 1/1. Functionally, catalyzes the formation of S-adenosylmethionine (AdoMet) from methionine and ATP. The overall synthetic reaction is composed of two sequential steps, AdoMet formation and the subsequent tripolyphosphate hydrolysis which occurs prior to release of AdoMet from the enzyme. In Erythrobacter litoralis (strain HTCC2594), this protein is S-adenosylmethionine synthase.